A 470-amino-acid chain; its full sequence is Neuraminidase (470 aa).

The Intravirion segment spans residues 1–6 (MNPNQK). Residues 7–27 (IICISATGMTLSVVSLLIGIA) form a helical membrane-spanning segment. The tract at residues 11 to 33 (SATGMTLSVVSLLIGIANLGLNI) is involved in apical transport and lipid raft association. At 28 to 470 (NLGLNIGLHY…HDGAEIIYFK (443 aa)) the chain is on the virion surface side. Positions 36–88 (HYKVGDTPDANTPNVNETNSTTTIINNNTQNNFTNITNIIVSKNEERTFLNLT) are hypervariable stalk region. Residues Asn-51, Asn-54, Asn-62, Asn-67, Asn-70, and Asn-86 are each glycosylated (N-linked (GlcNAc...) asparagine; by host). The interval 91 to 470 (LCEVNSWHIL…HDGAEIIYFK (380 aa)) is head of neuraminidase. 8 disulfide bridges follow: Cys-92–Cys-419, Cys-124–Cys-129, Cys-184–Cys-231, Cys-233–Cys-238, Cys-279–Cys-292, Cys-281–Cys-290, Cys-319–Cys-337, and Cys-423–Cys-449. Residue Arg-118 participates in substrate binding. Residue Asn-146 is glycosylated (N-linked (GlcNAc...) asparagine; by host). Asp-151 acts as the Proton donor/acceptor in catalysis. Arg-152 contributes to the substrate binding site. A glycan (N-linked (GlcNAc...) asparagine; by host) is linked at Asn-201. Position 277 to 278 (277 to 278 (EE)) interacts with substrate. Residue Arg-293 coordinates substrate. Asp-294, Gly-298, and Asp-325 together coordinate Ca(2+). Arg-372 contacts substrate. N-linked (GlcNAc...) asparagine; by host glycosylation occurs at Asn-402. Tyr-406 (nucleophile) is an active-site residue.

Belongs to the glycosyl hydrolase 34 family. As to quaternary structure, homotetramer. The cofactor is Ca(2+). N-glycosylated.

The protein resides in the virion membrane. It is found in the host apical cell membrane. The catalysed reaction is Hydrolysis of alpha-(2-&gt;3)-, alpha-(2-&gt;6)-, alpha-(2-&gt;8)- glycosidic linkages of terminal sialic acid residues in oligosaccharides, glycoproteins, glycolipids, colominic acid and synthetic substrates.. Inhibited by the neuraminidase inhibitors zanamivir (Relenza) and oseltamivir (Tamiflu). These drugs interfere with the release of progeny virus from infected cells and are effective against all influenza strains. Resistance to neuraminidase inhibitors is quite rare. Functionally, catalyzes the removal of terminal sialic acid residues from viral and cellular glycoconjugates. Cleaves off the terminal sialic acids on the glycosylated HA during virus budding to facilitate virus release. Additionally helps virus spread through the circulation by further removing sialic acids from the cell surface. These cleavages prevent self-aggregation and ensure the efficient spread of the progeny virus from cell to cell. Otherwise, infection would be limited to one round of replication. Described as a receptor-destroying enzyme because it cleaves a terminal sialic acid from the cellular receptors. May facilitate viral invasion of the upper airways by cleaving the sialic acid moieties on the mucin of the airway epithelial cells. Likely to plays a role in the budding process through its association with lipid rafts during intracellular transport. May additionally display a raft-association independent effect on budding. Plays a role in the determination of host range restriction on replication and virulence. Sialidase activity in late endosome/lysosome traffic seems to enhance virus replication. This is Neuraminidase from Influenza A virus (strain A/Budgerigar/Hokkaido/1/1977 H4N6).